Consider the following 234-residue polypeptide: 7-cyano-7-deazaguanine synthase (234 aa).

7-17 (LSGGLDSAVCM) serves as a coordination point for ATP. Positions 197, 208, 211, and 214 each coordinate Zn(2+).

It belongs to the QueC family. It depends on Zn(2+) as a cofactor.

The enzyme catalyses 7-carboxy-7-deazaguanine + NH4(+) + ATP = 7-cyano-7-deazaguanine + ADP + phosphate + H2O + H(+). Its pathway is purine metabolism; 7-cyano-7-deazaguanine biosynthesis. Catalyzes the ATP-dependent conversion of 7-carboxy-7-deazaguanine (CDG) to 7-cyano-7-deazaguanine (preQ(0)). The polypeptide is 7-cyano-7-deazaguanine synthase (Methanococcus aeolicus (strain ATCC BAA-1280 / DSM 17508 / OCM 812 / Nankai-3)).